Consider the following 164-residue polypeptide: Vasopressin-neurophysin 2-copeptin (164 aa).

Positions 1–19 (MPDTMLPACFLGLLAFSSA) are cleaved as a signal peptide. A disulfide bond links Cys20 and Cys25. Position 28 is a glycine amide (Gly28). Intrachain disulfides connect Cys41–Cys85, Cys44–Cys58, Cys52–Cys75, Cys59–Cys65, Cys92–Cys104, Cys98–Cys116, and Cys105–Cys110. Residue Asn131 is glycosylated (N-linked (GlcNAc...) asparagine).

Belongs to the vasopressin/oxytocin family. As to quaternary structure, interacts with vasopressin receptors V1bR/AVPR1B (Ki=85 pM), V1aR/AVPR1A (Ki=0.6 nM) and V2R/AVPR2 (Ki=4.9 nM). Interacts with oxytocin receptor (OXTR) (Ki=110 nM). In terms of assembly, (Microbial infection) May interact with SARS coronavirus-2/SARS-CoV-2; they may form a complex with secreted ACE2.

The protein resides in the secreted. Functionally, specifically binds vasopressin. In terms of biological role, has a direct antidiuretic action on the kidney, it also causes vasoconstriction of the peripheral vessels. Acts by binding to vasopressin receptors (V1bR/AVPR1B, V1aR/AVPR1A, and V2R/AVPR2). The polypeptide is Vasopressin-neurophysin 2-copeptin (AVP) (Homo sapiens (Human)).